Here is a 426-residue protein sequence, read N- to C-terminus: Enolase (426 aa).

Residue glutamine 163 coordinates (2R)-2-phosphoglycerate. Glutamate 205 acts as the Proton donor in catalysis. Mg(2+)-binding residues include aspartate 242, glutamate 285, and aspartate 312. Lysine 337, arginine 366, serine 367, and lysine 388 together coordinate (2R)-2-phosphoglycerate. The active-site Proton acceptor is the lysine 337.

This sequence belongs to the enolase family. Component of the RNA degradosome, a multiprotein complex involved in RNA processing and mRNA degradation. The cofactor is Mg(2+).

The protein resides in the cytoplasm. It localises to the secreted. It is found in the cell surface. The catalysed reaction is (2R)-2-phosphoglycerate = phosphoenolpyruvate + H2O. The protein operates within carbohydrate degradation; glycolysis; pyruvate from D-glyceraldehyde 3-phosphate: step 4/5. Catalyzes the reversible conversion of 2-phosphoglycerate (2-PG) into phosphoenolpyruvate (PEP). It is essential for the degradation of carbohydrates via glycolysis. The polypeptide is Enolase (Nitrosococcus oceani (strain ATCC 19707 / BCRC 17464 / JCM 30415 / NCIMB 11848 / C-107)).